A 2546-amino-acid chain; its full sequence is Formin-J (2546 aa).

Disordered regions lie at residues 1 to 40 (MEENTNNIDNGHMGDNNNENNNNSNNNNNNNSNSSSSFVK), 61 to 108 (ENSN…PLSE), 188 to 270 (KNIT…PNSA), 369 to 414 (TTNN…SSSS), 502 to 541 (TNSFGSSTTTTISGGGSGSSSVNSSGGGSGTTPINVTPNS), 802 to 849 (SSIS…NTRK), 879 to 898 (TSVPTSPTSKNPLITSNNNN), 987 to 1101 (TTNN…GGIG), 1485 to 1529 (PKSK…ASLS), 1558 to 1601 (KRSK…FKSP), 1659 to 1775 (INNI…KVNS), 1840 to 1869 (VPTTTTSTTTTTQTTPPPVTINEKEKETQS), and 2014 to 2033 (SNLSRKSSKSSNNSSTSSLE). 2 stretches are compositionally biased toward low complexity: residues 16–37 (NNNENNNNSNNNNNNNSNSSSS) and 62–98 (NSNNSITSGGSSSNSGEISSNNNNNNNNNGILKNSTS). 2 stretches are compositionally biased toward polar residues: residues 99–108 (GSKDNTPLSE) and 188–198 (KNITPSKNNSP). 2 stretches are compositionally biased toward low complexity: residues 203-237 (NNNNNNNNNNNNNNNNNNNNNNNNNNNNNNNNNNN) and 247-270 (NKNSIYNTNSNNNSNTTNSTPNSA). A compositionally biased stretch (polar residues) spans 377-389 (AESLTTYSESSEI). 2 stretches are compositionally biased toward low complexity: residues 390–414 (STDSTGVCSSSSSTSSTLSSKSSSS) and 502–513 (TNSFGSSTTTTI). The 54-residue stretch at 391–444 (TDSTGVCSSSSSTSSTLSSKSSSSSSFNKFMEFLLIYIEDNDSTNGTWVNGNKL) folds into the FHA domain. The region spanning 457–963 (KITLSTPDFS…SSISNEQEYQ (507 aa)) is the GBD/FH3 domain. Composition is skewed to polar residues over residues 879–891 (TSVPTSPTSKNPL) and 992–1007 (SSAKNIEVDSSVNKSP). The span at 1033–1042 (VPPPPPPPPG) shows a compositional bias: pro residues. Positions 1043–1056 (GNNNNESDVPSSSG) are enriched in low complexity. Over residues 1057–1097 (GPPPPPPPPPPPGKSSGGGPPPPPPPPPKGGKGGPPPPPPI) the composition is skewed to pro residues. Residues 1072-1098 (SGGGPPPPPPPPPKGGKGGPPPPPPIG) form the FH1 domain. The FH2 domain maps to 1106–1495 (KVKEEQPSVP…KSKKYQEQQN (390 aa)). Residues 1492 to 1502 (EQQNKPTQNND) are compositionally biased toward polar residues. Residues 1507–1529 (SKLSNLPSSSSINDESSSSASLS) show a composition bias toward low complexity. One can recognise a DAD domain in the interval 1563 to 1593 (EQEPVVEPIQITPKVGSAASAEPSPSIKSRD). The segment covering 1665 to 1679 (SSSSSSSSSSSSSSS) has biased composition (low complexity). Over residues 1687-1717 (HNTESEIKKEFISNSSMDKDKEKIKEKEKGT) the composition is skewed to basic and acidic residues. Residues 1732-1745 (KSTTTSPSSSSSKK) show a composition bias toward low complexity. Positions 1746 to 1757 (QIPSLSECLQES) are enriched in polar residues. Low complexity-rich tracts occupy residues 1763 to 1775 (RSSSYSPNSKVNS) and 1841 to 1853 (PTTTTSTTTTTQT). Residues 2067–2118 (IDDNQQKQQKQQQQQQQQQQQQQQLPQPQQQQQQQQQQQQQQQQQQQQQQQQ) are a coiled coil. The span at 2121-2154 (QQSTTTTTISTHHPQLKQVQPQSPSSLSQQPTQQ) shows a compositional bias: low complexity. Disordered regions lie at residues 2121–2369 (QQST…PKTV), 2381–2473 (SHKK…SYSS), and 2485–2510 (SPSSSITSCKPSPGAVSSTSSTLKTP). Residues 2160 to 2179 (QPSSPLQSHYKPQQKPQTTY) are compositionally biased toward polar residues. 2 stretches are compositionally biased toward low complexity: residues 2188-2206 (ANPFPSSTTSTNSSPSNAS) and 2237-2256 (SSASSNSSSVSGSSQSTPLS). Polar residues predominate over residues 2274–2287 (TPPSSSISNSTATT). Residues 2302-2315 (SPSSSSLEQSSNAS) show a composition bias toward low complexity. Over residues 2332-2342 (FKKHKKSHSKS) the composition is skewed to basic residues. Composition is skewed to low complexity over residues 2388 to 2439 (VDQS…SSSS), 2459 to 2473 (NISSGNISNNTSYSS), and 2485 to 2497 (SPSSSITSCKPSP). Over residues 2499–2508 (AVSSTSSTLK) the composition is skewed to polar residues.

The protein belongs to the formin homology family. Diaphanous subfamily. In terms of assembly, interacts (via GBD/FH3 domain) with activated Rho-GTPases.

In terms of biological role, formins play an important role in the nucleation of actin and the formation of linear actin filaments. This chain is Formin-J (forJ), found in Dictyostelium discoideum (Social amoeba).